A 1860-amino-acid chain; its full sequence is MGAGSARGARGTAAAAAARGGGFLFSWILVSFACHLASTQGAPEDVDILQRLGLSWTKAGSPAPPGVIPFQSGFIFTQRARLQAPTGTVIPAALGTELALVLSLCSHRVNHAFLFAVRSQKRKLQLGLQFLPGKTVVHLGSRRSVAFDLDMHDGRWHHLALELRGRTVTLVTACGQRRVPVLLPFHRDPALDPGGSFLFGKMNPHAVQFEGALCQFSIYPVTQVAHNYCTHLRKQCGQADTYQSPLGPLFSQDSGRPFTFQSDLALLGLENLTTATPALGSLPAGRGPRGTVAPATPTKPQRTSPTNPHQHMAVGGPAQTPLLPAKLSASNALDPMLPASVGGSTRTPRPAAAQPSQKITATKIPKSLPTKPSAPSTSIVPIKSPHPTQKTAPSSFTKSALPTQKQVPPTSRPVPARVSRPAEKPIQRNPGMPRPPPPSTRPLPPTTSSSKKPIPTLARTEAKITSHASKPASARTSTHKPPPFTALSSSPAPTPGSTRSTRPPATMVPPTSGTSTPRTAPAVPTPGSAPTGSKKPIGSEASKKAGPKSSPRKPVPLRPGKAARDVPLSDLTTRPSPRQPQPSQQTTPALVLAPAQFLSSSPRPTSSGYSIFHLAGSTPFPLLMGPPGPKGDCGLPGPPGLPGLPGIPGARGPRGPPGPYGNPGLPGPPGAKGQKGDPGLSPGKAHDGAKGDMGLPGLSGNPGPPGRKGHKGYPGPAGHPGEQGQPGPEGSPGAKGYPGRQGLPGPVGDPGPKGSRGYIGLPGLFGLPGSDGERGLPGVPGKRGKMGMPGFPGVFGERGPPGLDGNPGELGLPGPPGVPGLIGDLGVLGPIGYPGPKGMKGLMGSVGEPGLKGDKGEQGVPGVSGDPGFQGDKGSQGLPGFPGARGKPGPLGKVGDKGSIGFPGPPGPEGFPGDIGPPGDNGPEGMKGKPGARGLPGPRGQLGPEGDEGPMGPPGAPGLEGQPGRKGFPGRPGLDGVKGEPGDPGRPGPVGEQGFMGFIGLVGEPGIVGEKGDRGMMGPPGVPGPKGSMGHPGMPGGMGTPGEPGPQGPPGSRGPPGMRGAKGRRGPRGPDGPAGEQGSRGLKGPPGPQGRPGRPGQQGVAGERGHLGSRGFPGIPGPSGPPGTKGLPGEPGPQGPQGPIGPPGEMGPKGPPGAVGEPGLPGEAGMKGDLGPLGTPGEQGLIGQRGEPGLEGDSGPMGPDGLKGDRGDPGPDGEHGEKGQEGLMGEDGPPGPPGVTGVRGPEGKSGKQGEKGRTGAKGAKGYQGQLGEMGVPGDPGPPGTPGPKGSRGSLGPTGAPGRMGAQGEPGLAGYDGHKGIVGPLGPPGPKGEKGEQGEDGKAEGPPGPPGDRGPVGDRGDRGEPGDPGYPGQEGVQGLRGKPGQQGQPGHPGPRGWPGPKGSKGAEGPKGKQGKAGAPGRRGVQGLQGLPGPRGVVGRQGLEGIAGPDGLPGRDGQAGQQGEQGDDGDPGPMGPAGKRGNPGVAGLPGAQGPPGFKGESGLPGQLGPPGKRGTEGRTGLPGNQGEPGSKGQPGDSGEMGFPGMAGLFGPKGPPGDIGFKGIQGPRGPPGLMGKEGIVGPLGILGPSGLPGPKGDKGSRGDWGLQGPRGPPGPRGRPGPPGPPGGPIQLQQDDLGAAFQTWMDTSGALRPESYSYPDRLVLDQGGEIFKTLHYLSNLIQSIKTPLGTKENPARVCRDLMDCEQKMVDGTYWVDPNLGCSSDTIEVSCNFTHGGQTCLKPITASKVEFAISRVQMNFLHLLSSEVTQHITIHCLNMTVWQEGTGQTPAKQAVRFRAWNGQIFEAGGQFRPEVSMDGCKVQDGRWHQTLFTFRTQDPQQLPIISVDNLPPASSGKQYRLEVGPACFL.

Positions Met1–Gly41 are cleaved as a signal peptide. A propeptide spans Ala42 to Met624 (N-terminal propeptide). The region spanning Gln71 to Cys236 is the Laminin G-like domain. The N-linked (GlcNAc...) asparagine glycan is linked to Asn271. Disordered regions lie at residues Ala278 to Gly608, Gly625 to Gly772, and Leu851 to Gln1625. Polar residues-rich tracts occupy residues Thr298–His309 and His386–Pro409. Pro residues predominate over residues Met432–Pro445. Composition is skewed to low complexity over residues Thr446 to Leu457 and Thr485 to Ala505. Polar residues predominate over residues Pro509–Arg518. 2 stretches are compositionally biased toward low complexity: residues Thr572 to Pro588 and Ser599 to Gly608. Collagen-like domains follow at residues Gly625–Gly679, Gly688–Val747, Gly748–Pro807, Gly808–Pro867, Gly871–Pro930, Gly931–Val990, Gly1003–Lys1062, Gly1066–Lys1125, Gly1126–Arg1185, Gly1192–Lys1251, Gly1258–Val1317, Gly1318–Pro1378, Gly1382–Ala1441, Gly1442–Leu1501, Gly1502–Arg1561, and Gly1562–Pro1621. Positions Gly625–Pro1618 are triple-helical region. A compositionally biased stretch (pro residues) spans Arg654–Pro669. Low complexity predominate over residues Pro714–Ala734. 2 stretches are compositionally biased toward low complexity: residues Phe911–Glu924 and Ala932–Pro944. Residues Gly1033–Gly1042 are compositionally biased toward gly residues. Residues Glu1043–Arg1053 show a composition bias toward pro residues. The span at Glu1130 to Pro1142 shows a compositional bias: pro residues. Basic and acidic residues-rich tracts occupy residues Leu1202–Gln1220 and Pro1241–Arg1253. Composition is skewed to basic and acidic residues over residues Lys1326 to Ala1338 and Pro1350 to Pro1360. A compositionally biased stretch (low complexity) spans Arg1449–Glu1458. The segment covering Ile1572–Pro1587 has biased composition (low complexity). Pro residues predominate over residues Arg1603–Gly1620. The propeptide at Ile1622–Leu1860 is C-terminal propeptide. The 201-residue stretch at Gly1660 to Leu1860 folds into the Fibrillar collagen NC1 domain. 3 disulfide bridges follow: Cys1690–Cys1722, Cys1731–Cys1858, and Cys1767–Cys1811. Residues Asp1708, Asn1710, Cys1713, and Asp1716 each contribute to the Ca(2+) site. The N-linked (GlcNAc...) asparagine glycan is linked to Asn1769.

The protein belongs to the fibrillar collagen family.

It is found in the secreted. The protein localises to the extracellular space. It localises to the extracellular matrix. Functionally, plays a role during the calcification of cartilage and the transition of cartilage to bone. This is Collagen alpha-1(XXVII) chain (COL27A1) from Homo sapiens (Human).